We begin with the raw amino-acid sequence, 125 residues long: Fumarate reductase subunit D (125 aa).

A run of 3 helical transmembrane segments spans residues 29–49, 64–84, and 102–122; these read VTAL…PLGW, NPIT…HAAH, and VIAL…GWML.

It belongs to the FrdD family. In terms of assembly, part of an enzyme complex containing four subunits: a flavoprotein (FrdA), an iron-sulfur protein (FrdB), and two hydrophobic anchor proteins (FrdC and FrdD).

The protein resides in the cell membrane. In terms of biological role, anchors the catalytic components of the fumarate reductase complex to the cell membrane, binds quinones. This is Fumarate reductase subunit D from Mycobacterium bovis (strain BCG / Tokyo 172 / ATCC 35737 / TMC 1019).